We begin with the raw amino-acid sequence, 186 residues long: Probable RNA 2'-phosphotransferase (186 aa).

The protein belongs to the KptA/TPT1 family.

Functionally, removes the 2'-phosphate from RNA via an intermediate in which the phosphate is ADP-ribosylated by NAD followed by a presumed transesterification to release the RNA and generate ADP-ribose 1''-2''-cyclic phosphate (APPR&gt;P). May function as an ADP-ribosylase. The protein is Probable RNA 2'-phosphotransferase of Pectobacterium carotovorum subsp. carotovorum (strain PC1).